The primary structure comprises 91 residues: uncharacterized protein (91 aa).

Residues 50–70 traverse the membrane as a helical segment; sequence FGFFGGPFIGGLAGGLIGSAL.

The protein localises to the cell membrane. This is an uncharacterized protein from Bacillus subtilis (strain 168).